A 473-amino-acid polypeptide reads, in one-letter code: ATP synthase subunit beta 2 (473 aa).

158–165 is a binding site for ATP; the sequence is GGAGVGKT.

This sequence belongs to the ATPase alpha/beta chains family. F-type ATPases have 2 components, CF(1) - the catalytic core - and CF(0) - the membrane proton channel. CF(1) has five subunits: alpha(3), beta(3), gamma(1), delta(1), epsilon(1). CF(0) has three main subunits: a(1), b(2) and c(9-12). The alpha and beta chains form an alternating ring which encloses part of the gamma chain. CF(1) is attached to CF(0) by a central stalk formed by the gamma and epsilon chains, while a peripheral stalk is formed by the delta and b chains.

It localises to the cell membrane. The catalysed reaction is ATP + H2O + 4 H(+)(in) = ADP + phosphate + 5 H(+)(out). In terms of biological role, produces ATP from ADP in the presence of a proton gradient across the membrane. The catalytic sites are hosted primarily by the beta subunits. This Listeria welshimeri serovar 6b (strain ATCC 35897 / DSM 20650 / CCUG 15529 / CIP 8149 / NCTC 11857 / SLCC 5334 / V8) protein is ATP synthase subunit beta 2.